The sequence spans 703 residues: Elongation factor G 2 (703 aa).

The region spanning 8 to 291 (ELYRNIGIVA…AVIDYLPAPS (284 aa)) is the tr-type G domain. Residues 17 to 24 (AHVDAGKT), 89 to 93 (DTPGH), and 143 to 146 (NKMD) each bind GTP.

Belongs to the TRAFAC class translation factor GTPase superfamily. Classic translation factor GTPase family. EF-G/EF-2 subfamily.

It localises to the cytoplasm. Its function is as follows. Catalyzes the GTP-dependent ribosomal translocation step during translation elongation. During this step, the ribosome changes from the pre-translocational (PRE) to the post-translocational (POST) state as the newly formed A-site-bound peptidyl-tRNA and P-site-bound deacylated tRNA move to the P and E sites, respectively. Catalyzes the coordinated movement of the two tRNA molecules, the mRNA and conformational changes in the ribosome. In Pseudomonas putida (strain ATCC 47054 / DSM 6125 / CFBP 8728 / NCIMB 11950 / KT2440), this protein is Elongation factor G 2 (fusB).